The primary structure comprises 380 residues: Putative T-box protein 40 (380 aa).

Residues 11–192 (MAEEDRWLTQ…KNATFENRLD (182 aa)) constitute a DNA-binding region (T-box). The interval 188 to 215 (ENRLDGGNKRKNTNSREEPSSKRSKNET) is disordered. Over residues 189–215 (NRLDGGNKRKNTNSREEPSSKRSKNET) the composition is skewed to basic and acidic residues.

It localises to the nucleus. In Caenorhabditis elegans, this protein is Putative T-box protein 40 (tbx-40).